We begin with the raw amino-acid sequence, 214 residues long: MADS-box protein CMB2 (214 aa).

Positions 3-58 constitute an MADS-box domain; sequence RGKLEIRKIENKTNRQVTFSKRRNGIMKKAQELTVLCDAKVSLLMISSTHKLHHYL. Residues 84-174 enclose the K-box domain; sequence WERMQEQHRK…VMELEAKFRG (91 aa).

In terms of tissue distribution, in flowers. Not found in vegetative tissues.

It is found in the nucleus. In Dianthus caryophyllus (Carnation), this protein is MADS-box protein CMB2 (CMB2).